The sequence spans 89 residues: Small ribosomal subunit protein uS15 (89 aa).

This sequence belongs to the universal ribosomal protein uS15 family. In terms of assembly, part of the 30S ribosomal subunit. Forms a bridge to the 50S subunit in the 70S ribosome, contacting the 23S rRNA.

One of the primary rRNA binding proteins, it binds directly to 16S rRNA where it helps nucleate assembly of the platform of the 30S subunit by binding and bridging several RNA helices of the 16S rRNA. In terms of biological role, forms an intersubunit bridge (bridge B4) with the 23S rRNA of the 50S subunit in the ribosome. This Magnetococcus marinus (strain ATCC BAA-1437 / JCM 17883 / MC-1) protein is Small ribosomal subunit protein uS15.